Reading from the N-terminus, the 275-residue chain is Membrane protein insertase YidC 1 (275 aa).

The first 25 residues, 1–25 (MRKVLRVKKNIKIARIVPLVLLLVA), serve as a signal peptide directing secretion. A lipid anchor (N-palmitoyl cysteine) is attached at C26. Residue C26 is the site of S-diacylglycerol cysteine attachment. A run of 5 helical transmembrane segments spans residues 58-78 (SIGVGIILFTLTIRLMLMPLF), 129-149 (YASLLPLLIQMPVMIALFQAL), 171-191 (LYLLPVLAAVFTFLSTWLTNL), 198-216 (VMMTVMIYVMPLMIFFMGF), and 222-240 (VVLYWTVSNAFQVVQLLLL).

The protein belongs to the OXA1/ALB3/YidC family. Type 2 subfamily.

It localises to the cell membrane. Required for the insertion and/or proper folding and/or complex formation of integral membrane proteins into the membrane. Involved in integration of membrane proteins that insert both dependently and independently of the Sec translocase complex, as well as at least some lipoproteins. The polypeptide is Membrane protein insertase YidC 1 (Streptococcus pyogenes serotype M1).